A 226-amino-acid chain; its full sequence is Small ribosomal subunit protein uS2c (226 aa).

This sequence belongs to the universal ribosomal protein uS2 family.

The protein resides in the plastid. It is found in the chloroplast. In Ostreococcus tauri, this protein is Small ribosomal subunit protein uS2c (rps2).